Reading from the N-terminus, the 302-residue chain is Sodium/potassium-transporting ATPase subunit beta-233 (302 aa).

At 1–30 (MSGNKDSDGGWKTFIWNSEKKELLGRTGCS) the chain is on the cytoplasmic side. Residues 31 to 51 (WFKILLFYVIFYGCLAAVFVG) form a helical; Signal-anchor for type II membrane protein membrane-spanning segment. Residues 52 to 302 (TIQALLLTLS…FDIKITVNDS (251 aa)) lie on the Extracellular side of the membrane. Cystine bridges form between Cys125-Cys148 and Cys158-Cys174. N-linked (GlcNAc...) asparagine glycosylation is found at Asn193 and Asn263. Cys213 and Cys274 are oxidised to a cystine.

Belongs to the X(+)/potassium ATPases subunit beta family. In terms of assembly, the sodium/potassium-transporting ATPase is composed of a catalytic alpha subunit, an auxiliary non-catalytic beta subunit and an additional regulatory subunit. In terms of processing, glycosylated. As to expression, expressed mainly in epithelial tissues.

It localises to the cell membrane. Its function is as follows. This is the non-catalytic component of the active enzyme, which catalyzes the hydrolysis of ATP coupled with the exchange of Na(+) and K(+) ions across the plasma membrane. The beta subunit regulates, through assembly of alpha/beta heterodimers, the number of sodium pumps transported to the plasma membrane. In Anguilla anguilla (European freshwater eel), this protein is Sodium/potassium-transporting ATPase subunit beta-233.